Consider the following 28-residue polypeptide: Phospholipase A2 3 (28 aa).

The protein belongs to the phospholipase A2 family. Group I subfamily. It depends on Ca(2+) as a cofactor. Expressed by the venom gland.

The protein resides in the secreted. It catalyses the reaction a 1,2-diacyl-sn-glycero-3-phosphocholine + H2O = a 1-acyl-sn-glycero-3-phosphocholine + a fatty acid + H(+). Its function is as follows. Snake venom phospholipase A2 (PLA2) that inhibits neuromuscular transmission by blocking acetylcholine release from the nerve termini. PLA2 catalyzes the calcium-dependent hydrolysis of the 2-acyl groups in 3-sn-phosphoglycerides. This Micrurus nigrocinctus (Central American coral snake) protein is Phospholipase A2 3.